The sequence spans 468 residues: UDP-N-acetylmuramate--L-alanine ligase (468 aa).

Position 121–127 (121–127 (GSHGKTT)) interacts with ATP.

Belongs to the MurCDEF family.

It localises to the cytoplasm. The catalysed reaction is UDP-N-acetyl-alpha-D-muramate + L-alanine + ATP = UDP-N-acetyl-alpha-D-muramoyl-L-alanine + ADP + phosphate + H(+). It participates in cell wall biogenesis; peptidoglycan biosynthesis. In terms of biological role, cell wall formation. The polypeptide is UDP-N-acetylmuramate--L-alanine ligase (Borrelia garinii subsp. bavariensis (strain ATCC BAA-2496 / DSM 23469 / PBi) (Borreliella bavariensis)).